A 263-amino-acid polypeptide reads, in one-letter code: Small ribosomal subunit protein eS4, Y isoform 1 (263 aa).

The region spanning 42–104 is the S4 RNA-binding domain; it reads LPLIVFLRNR…TGEHFRLVYD (63 aa).

Belongs to the eukaryotic ribosomal protein eS4 family.

The sequence is that of Small ribosomal subunit protein eS4, Y isoform 1 (RPS4Y1) from Homo sapiens (Human).